The following is a 429-amino-acid chain: D-inositol 3-phosphate glycosyltransferase (429 aa).

Position 20 (His20) interacts with 1D-myo-inositol 3-phosphate. UDP-N-acetyl-alpha-D-glucosamine-binding positions include 26 to 27 and Gly34; that span reads QP. Residues 31 to 36, Lys89, Tyr122, Thr146, and Arg166 contribute to the 1D-myo-inositol 3-phosphate site; that span reads DAGGMN. Residues Arg240, Lys245, and Gln306 each contribute to the UDP-N-acetyl-alpha-D-glucosamine site. Mg(2+) contacts are provided by Tyr315, Arg316, and Ala318. UDP-N-acetyl-alpha-D-glucosamine contacts are provided by Glu328 and Glu336. Thr342 serves as a coordination point for Mg(2+).

The protein belongs to the glycosyltransferase group 1 family. MshA subfamily. Homodimer.

The catalysed reaction is 1D-myo-inositol 3-phosphate + UDP-N-acetyl-alpha-D-glucosamine = 1D-myo-inositol 2-acetamido-2-deoxy-alpha-D-glucopyranoside 3-phosphate + UDP + H(+). Catalyzes the transfer of a N-acetyl-glucosamine moiety to 1D-myo-inositol 3-phosphate to produce 1D-myo-inositol 2-acetamido-2-deoxy-glucopyranoside 3-phosphate in the mycothiol biosynthesis pathway. In Nocardiopsis dassonvillei (strain ATCC 23218 / DSM 43111 / CIP 107115 / JCM 7437 / KCTC 9190 / NBRC 14626 / NCTC 10488 / NRRL B-5397 / IMRU 509) (Actinomadura dassonvillei), this protein is D-inositol 3-phosphate glycosyltransferase.